The primary structure comprises 157 residues: Phosphopantetheine adenylyltransferase (157 aa).

Residue serine 8 participates in substrate binding. Residues 8–9 and histidine 16 each bind ATP; that span reads SF. Residues lysine 40, threonine 72, and arginine 86 each coordinate substrate. Residues 87–89, glutamate 97, and 122–128 each bind ATP; these read GLR and FSFLSSS.

Belongs to the bacterial CoaD family. Homohexamer. It depends on Mg(2+) as a cofactor.

Its subcellular location is the cytoplasm. The catalysed reaction is (R)-4'-phosphopantetheine + ATP + H(+) = 3'-dephospho-CoA + diphosphate. It functions in the pathway cofactor biosynthesis; coenzyme A biosynthesis; CoA from (R)-pantothenate: step 4/5. Its function is as follows. Reversibly transfers an adenylyl group from ATP to 4'-phosphopantetheine, yielding dephospho-CoA (dPCoA) and pyrophosphate. The chain is Phosphopantetheine adenylyltransferase from Prochlorococcus marinus (strain MIT 9211).